Reading from the N-terminus, the 134-residue chain is Large ribosomal subunit protein bL17 (134 aa).

It belongs to the bacterial ribosomal protein bL17 family. Part of the 50S ribosomal subunit. Contacts protein L32.

The sequence is that of Large ribosomal subunit protein bL17 from Thioalkalivibrio sulfidiphilus (strain HL-EbGR7).